We begin with the raw amino-acid sequence, 358 residues long: MEMTMRWFGSNADKIKLSEIAQVPGVKGVVGMIMDIPAGEIWPKERIKALKEEIEAAGLTLKVIESVNIHDDIKIGLPTRDKYIENYKETIRNLAEFGIEVICYNFMPVFDWLKSDLDYRLADNSQTMAFVARDIPANPQEIIDRVQAADGCFSLPGWEPERLSEVRGLFEAYKNVDEHKLRENFAYFLKAIIPTCEEVGIKMAVHPDDPPYPMFGLPRVVKNREDLDWICNVVDSPSNAITLCTGSIAEDPANNVYEIMAEFVKRDRIPFAHVRNIKFLPSGKKDFYEAPHMSKYGSLDMYKIMKAMYDNGFDGYIRPDHGRMIWGETGRPGYGLYDRALGASYLNGLWEALEKTNQ.

Belongs to the mannonate dehydratase family. The cofactor is Fe(2+). Mn(2+) serves as cofactor.

The catalysed reaction is D-mannonate = 2-dehydro-3-deoxy-D-gluconate + H2O. The protein operates within carbohydrate metabolism; pentose and glucuronate interconversion. Catalyzes the dehydration of D-mannonate. The sequence is that of Mannonate dehydratase from Lactococcus lactis subsp. lactis (strain IL1403) (Streptococcus lactis).